Here is a 172-residue protein sequence, read N- to C-terminus: Large ribosomal subunit protein bL17 (172 aa).

The disordered stretch occupies residues 153-172 (AQAAEPVAAAEPATPATTAG).

This sequence belongs to the bacterial ribosomal protein bL17 family. As to quaternary structure, part of the 50S ribosomal subunit. Contacts protein L32.

In Sorangium cellulosum (strain So ce56) (Polyangium cellulosum (strain So ce56)), this protein is Large ribosomal subunit protein bL17.